A 227-amino-acid chain; its full sequence is DNA mismatch repair protein MutH (227 aa).

This sequence belongs to the MutH family.

It is found in the cytoplasm. Sequence-specific endonuclease that cleaves unmethylated GATC sequences. It is involved in DNA mismatch repair. The polypeptide is DNA mismatch repair protein MutH (Vibrio vulnificus (strain CMCP6)).